A 442-amino-acid chain; its full sequence is MPLPCDTILQAALIVTQDDARTVIEDGAIAIHEGRIAAVGQRDAIVGNWHGATVIDMGASLIMPGLVNAHTHASMTLLRGLADDLPLMDWLTGHIFPVEKGLTGELVELGALLGCAEMLRTGTTAFSDMYLIEDATLRAVDRAGLRCLAGEAIFAFPSPAYADPETAFDLVRAQHDRWKHHARAALAVAPHAVYTSTPAILARCRDLAEELGLPIHLHLAETATETAQCIEQHGARPVPYCDGLGLLTPRTTLAHCVDLTEGEIDLLAERGVTVAHCPESNMKLASGIAPATAMLGRGMTLGLGTDGAASNNSLNMFTEMTSCALLHKVHHMDPTCAPASAVLDMATRGGAHALHMQGIGRIEAGCPADIIALDLRAPNMQPIFNPASHLVYAATGHETRLAMVGGEVLYLDGCYTRFDMDDLLKEVRKARTWAMEQVRAAR.

Residues His-70 and His-72 each contribute to the Zn(2+) site. The substrate site is built by Glu-99 and His-191. Zn(2+) is bound at residue His-218. Residues Glu-221 and Asp-306 each contribute to the substrate site. Asp-306 contacts Zn(2+).

Belongs to the metallo-dependent hydrolases superfamily. MTA/SAH deaminase family. Requires Zn(2+) as cofactor.

It catalyses the reaction S-adenosyl-L-homocysteine + H2O + H(+) = S-inosyl-L-homocysteine + NH4(+). The enzyme catalyses S-methyl-5'-thioadenosine + H2O + H(+) = S-methyl-5'-thioinosine + NH4(+). Functionally, catalyzes the deamination of 5-methylthioadenosine and S-adenosyl-L-homocysteine into 5-methylthioinosine and S-inosyl-L-homocysteine, respectively. Is also able to deaminate adenosine. The polypeptide is 5-methylthioadenosine/S-adenosylhomocysteine deaminase (Nitratidesulfovibrio vulgaris (strain DP4) (Desulfovibrio vulgaris)).